Consider the following 634-residue polypeptide: Sodium-dependent neutral amino acid transporter B(0)AT1 (634 aa).

At 1 to 41 the chain is on the cytoplasmic side; it reads MVRLVLPNPGLEERIPSLDELEVIEKEEAGSRPKWDNKAQY. Ser17 bears the Phosphoserine mark. Residues 42–62 traverse the membrane as a helical segment; sequence MLTCVGFCVGLGNVWRFPYLC. The Extracellular portion of the chain corresponds to 63–67; that stretch reads QSHGG. A helical transmembrane segment spans residues 68-88; that stretch reads GAFMIPFLILLVFEGIPLLYL. The Cytoplasmic segment spans residues 89-119; that stretch reads EFAIGQRLRKGSMGVWSSIHPALKGIGIASM. Residues 120-140 traverse the membrane as a helical segment; sequence FVSFMVGLYYNTIIAWVMWYF. Residues 141–192 are Extracellular-facing; sequence FNSFQEPLPWSECPLNQNQTGYVEECAKSSSVDYFWYRETLNISTSISDSGS. 2 N-linked (GlcNAc...) asparagine glycosylation sites follow: Asn158 and Asn182. The chain crosses the membrane as a helical span at residues 193 to 213; that stretch reads IQWWILLCLTCAWSVLYVCII. Residues 214–221 are Cytoplasmic-facing; that stretch reads RGIETTGK. The helical transmembrane segment at 222–242 threads the bilayer; sequence AVYITSTLPYVVLTIFLIRGL. Residues 243–268 lie on the Extracellular side of the membrane; it reads TLKGATNGIVFLFTPNITELSNPNTW. Asn258 is a glycosylation site (N-linked (GlcNAc...) asparagine). A helical transmembrane segment spans residues 269 to 289; the sequence is LDAGAQVFYSFSLAFGGLISF. Topologically, residues 290-304 are cytoplasmic; it reads SSYNSVHNNCEMDSV. A helical transmembrane segment spans residues 305 to 325; it reads IVSVINGFTSVYAATVVYSII. Residues 326 to 413 are Extracellular-facing; that stretch reads GFRATERFDD…TEAITKMPVS (88 aa). N-linked (GlcNAc...) asparagine glycans are attached at residues Asn354 and Asn368. A helical transmembrane segment spans residues 414-434; sequence PLWSVLFFIMLFCLGLSSMFG. Over 435-456 the chain is Cytoplasmic; it reads NMEGVVVPLQDLNITPKKWPKE. Residues 457–477 form a helical membrane-spanning segment; that stretch reads LLTGLICLGTYLIAFIFTLNS. The Extracellular segment spans residues 478–487; sequence GQYWLSLLDS. Residues 488-508 traverse the membrane as a helical segment; the sequence is FAGSIPLLIIAFCEMFAVVYV. The Cytoplasmic portion of the chain corresponds to 509–531; the sequence is YGVDRFNKDIEFMIGHKPNIFWQ. A helical transmembrane segment spans residues 532–552; that stretch reads VTWRVVSPLIMLVIFLFFFVI. The Extracellular segment spans residues 553 to 581; it reads EVNKTLMYSIWDPNYEEFPKSQKIPYPNW. The N-linked (GlcNAc...) asparagine glycan is linked to Asn555. The helical transmembrane segment at 582–602 threads the bilayer; sequence VYAVVVTVAGVPCLSIPCFAI. At 603–634 the chain is on the cytoplasmic side; it reads YKFIRNCCQKSDDHHGLVNTLSTASVNGDLKN. Ser627 is subject to Phosphoserine.

It belongs to the sodium:neurotransmitter symporter (SNF) (TC 2.A.22) family. SLC6A19 subfamily. In terms of assembly, interacts in a tissue-specific manner with ACE2 in small intestine and with CLTRN in the kidney. Interacts with CLTRN; this interaction is required for trafficking of SLC6A19 to the plasma membrane and for its catalytic activation in kidneys. Interacts with ACE2; this interaction is required for trafficking of SLC6A19 to the plasma membrane and for its catalytic activation in intestine. Interacts with ANPEP; the interaction positively regulates its amino acid transporter activity. In terms of tissue distribution, predominantly expressed in kidney and small intestine (at protein level). Expressed in the intestinal brush border (at protein level). Expression not observed in other organs, such as lung, skeletal muscle, brain, liver and pancreas. In kidney, expression is localized in the renal cortex but not in the medulla. Substantial amounts of expression in the proximal tubules. The distal nephron segments and the glomeruli are consistently negative. In the small intestine, expression is exclusively localized in villus enterocytes. High resolution of the hybridization-positive villi reveals a gradient of expression with the highest levels in apical cells. Not detected in crypt cells or in any other cell types of the small intestine.

Its subcellular location is the cell membrane. The catalysed reaction is L-alanine(in) + Na(+)(in) = L-alanine(out) + Na(+)(out). It carries out the reaction L-cysteine(in) + Na(+)(in) = L-cysteine(out) + Na(+)(out). It catalyses the reaction L-glutamine(in) + Na(+)(in) = L-glutamine(out) + Na(+)(out). The enzyme catalyses glycine(in) + Na(+)(in) = glycine(out) + Na(+)(out). The catalysed reaction is L-isoleucine(in) + Na(+)(in) = L-isoleucine(out) + Na(+)(out). It carries out the reaction L-leucine(in) + Na(+)(in) = L-leucine(out) + Na(+)(out). It catalyses the reaction L-methionine(in) + Na(+)(in) = L-methionine(out) + Na(+)(out). The enzyme catalyses L-phenylalanine(in) + Na(+)(in) = L-phenylalanine(out) + Na(+)(out). The catalysed reaction is L-serine(in) + Na(+)(in) = L-serine(out) + Na(+)(out). It carries out the reaction L-tryptophan(in) + Na(+)(in) = L-tryptophan(out) + Na(+)(out). It catalyses the reaction L-tyrosine(in) + Na(+)(in) = L-tyrosine(out) + Na(+)(out). The enzyme catalyses L-valine(in) + Na(+)(in) = L-valine(out) + Na(+)(out). In terms of biological role, transporter that mediates resorption of neutral amino acids across the apical membrane of renal and intestinal epithelial cells. This uptake is sodium-dependent and chloride-independent. Requires CLTRN in kidney or ACE2 in intestine for cell surface expression and amino acid transporter activity. In Mus musculus (Mouse), this protein is Sodium-dependent neutral amino acid transporter B(0)AT1 (Slc6a19).